We begin with the raw amino-acid sequence, 594 residues long: MRIRSNVLLLSTAGALALVWFAVVFSWDDKSIFGIPTPGHAVASAYDSSVTLGTFNDMEVDSYVTNIYDNAPVLGCYDLSYHGLLKVSPKHEILCDMKFIRARVLETEAYAALKDLEHKKLTEEEKIEKHWFTFYGSSVFLPDHDVHYLVRRVVFSGEGKANRPITSILVAQIYDKNWNELNGHFLNVLNPNTGKLQHHAFPQVLPIAVNWDRNSKYRGQEDPRVVLRRGRFGPDPLVMFNTLTQNNKLRRLFTISPFDQYKTVMYRTNAFKMQTTEKNWVPFFLKDDQESVHFVYSFNPLRVLNCSLDNGACDVLFELPHDFGMSSELRGATPMLNLPQAIPMADDKEIWVSFPRTRISDCGCSETMYRPMLMLFVREGTNFFAELLSSSIDFGLEVIPYTGDGLPCSSGQSVLIPNSIDNWEVTGSNGEDILSLTFSEADKSTSVVHIRGLYKYLSELDGYGGPEAEDEHNFQRILSDLHFDGKKTIENFKKVQSCALDAAKAYCKEYGVTRGEEDRLKNKEKERKIEEKRKKEEERKKKEEEKKKKEEEEKKKKEEEEEEEKRLKELKKKLKELQEELEKQKDEVKDTKAK.

Topologically, residues 1 to 6 (MRIRSN) are cytoplasmic. Residues 7-27 (VLLLSTAGALALVWFAVVFSW) form a helical membrane-spanning segment. Over 28–594 (DDKSIFGIPT…KDEVKDTKAK (567 aa)) the chain is Extracellular. An N-linked (GlcNAc...) asparagine glycan is attached at N305. A coiled-coil region spans residues 512–594 (VTRGEEDRLK…KDEVKDTKAK (83 aa)). The span at 517-558 (EDRLKNKEKERKIEEKRKKEEERKKKEEEKKKKEEEEKKKKE) shows a compositional bias: basic and acidic residues. A disordered region spans residues 517-564 (EDRLKNKEKERKIEEKRKKEEERKKKEEEKKKKEEEEKKKKEEEEEEE).

It belongs to the BMT family.

It localises to the membrane. Beta-mannosyltransferase involved in cell wall biosynthesis. This Komagataella phaffii (strain ATCC 76273 / CBS 7435 / CECT 11047 / NRRL Y-11430 / Wegner 21-1) (Yeast) protein is Beta-mannosyltransferase 3 (BMT3).